We begin with the raw amino-acid sequence, 491 residues long: Cysteine protease ATG4 (491 aa).

The segment at 53–137 (KTKGEDSKLS…VDSSFDSSMA (85 aa)) is disordered. Positions 61–72 (LSTATSSDQQRP) are enriched in polar residues. A compositionally biased stretch (low complexity) spans 126-135 (DSVDSSFDSS). The active-site Nucleophile is the cysteine 206. Catalysis depends on residues aspartate 385 and histidine 387. The segment at 457–491 (VSEHDPSKGSASGRPSAIDEVETLSDDDGDTVLDG) is disordered. Acidic residues predominate over residues 475 to 491 (DEVETLSDDDGDTVLDG).

The protein belongs to the peptidase C54 family. Interacts with ATG8.

The protein localises to the cytoplasm. Its subcellular location is the nucleus. It localises to the preautophagosomal structure. It carries out the reaction [protein]-C-terminal L-amino acid-glycyl-phosphatidylethanolamide + H2O = [protein]-C-terminal L-amino acid-glycine + a 1,2-diacyl-sn-glycero-3-phosphoethanolamine. Functionally, cysteine protease that plays a key role in cytoplasm to vacuole transport (Cvt) and autophagy by mediating both proteolytic activation and delipidation of ATG8. Required for selective autophagic degradation of the nucleus (nucleophagy) as well as for mitophagy which contributes to regulate mitochondrial quantity and quality by eliminating the mitochondria to a basal level to fulfill cellular energy requirements and preventing excess ROS production. The protease activity is required for proteolytic activation of ATG8: cleaves the C-terminal amino acid of ATG8 to reveal a C-terminal glycine. ATG8 ubiquitin-like activity requires the exposure of the glycine at the C-terminus for its conjugation to phosphatidylethanolamine (PE) and its insertion to membranes, which is necessary for autophagy. The ATG8-PE conjugate mediates tethering between adjacent membranes and stimulates membrane hemifusion, leading to expansion of the autophagosomal membrane during autophagy. In addition to the protease activity, also catalyzes deconjugation of PE-conjugated forms of ATG8 during macroautophagy: ATG8 delipidation is required to release the protein from membranes, which facilitates multiple events during macroautophagy, and especially for efficient autophagosome biogenesis, the assembly of ATG9-containing tubulovesicular clusters into phagophores/autophagosomes, and for the disassembly of PAS-associated ATG components. ATG8 delipidation by ATG4 also recycles ATG8-PE generated on inappropriate membranes to maintain a reservoir of unlipidated ATG8 that is required for autophagosome formation at the PAS. This chain is Cysteine protease ATG4 (ATG4), found in Pyricularia oryzae (strain 70-15 / ATCC MYA-4617 / FGSC 8958) (Rice blast fungus).